The primary structure comprises 989 residues: Phosphoenolpyruvate carboxylase (989 aa).

Residues His-175 and Lys-630 contribute to the active site.

This sequence belongs to the PEPCase type 1 family. The cofactor is Mg(2+).

It carries out the reaction oxaloacetate + phosphate = phosphoenolpyruvate + hydrogencarbonate. Forms oxaloacetate, a four-carbon dicarboxylic acid source for the tricarboxylic acid cycle. This Prochlorococcus marinus (strain MIT 9515) protein is Phosphoenolpyruvate carboxylase.